A 542-amino-acid chain; its full sequence is ABC transport system permease protein p69 (542 aa).

12 consecutive transmembrane segments (helical) span residues 23-43 (ALAI…FSGF), 77-97 (IFYV…FSYL), 114-134 (FTIF…NNLF), 140-160 (ATLT…TAFF), 212-232 (LSIA…GGTV), 236-256 (LVLI…ASVF), 287-307 (VMIY…LVQL), 350-370 (TQAI…GFLA), 386-406 (LLVI…PIIF), 412-432 (IIFV…TINF), 481-501 (LVVF…NFFE), and 509-529 (GTIT…LMAV). Positions 349 to 526 (TTQAISLITL…VYLMVFEVIL (178 aa)) constitute an ABC transmembrane type-1 domain.

The protein belongs to the binding-protein-dependent transport system permease family.

It is found in the cell membrane. Functionally, probably part of a high-affinity transport system. The protein is ABC transport system permease protein p69 (p69) of Mycoplasma pneumoniae (strain ATCC 29342 / M129 / Subtype 1) (Mycoplasmoides pneumoniae).